A 622-amino-acid chain; its full sequence is MAEAGVGSAEGAEEERRAVEENFPVDGNSCIASGVPSLMNPITKPATTSFNNSVVEIPRKRKGSDSDNQDTVEVDGDPQKRNEDEEHLKIKDFREAHSQTEKRRRDKMNNLIEELSAMIPQCNPMARKLDKLTVLRMAVQHLKSLKGSTSSYTEVRYKPSFLKDDELRQLILRAADGFLFVVGCNRGKILFVSESVCKILNYDQTSLIGQSLFDYLHPKDVAKVKEQLSSSDVSPREKLVDGKTGLQVHTDFQAGPARLNSGARRSFFCRIKCSRTTVKEEKECLPNPKKKDHRKYCTIHCTGYMKNWPPSEVGVEEENDVEKNSSNFNCLVAIGRLHPYIVPQKSGEIKVKATEFVTRFAMDGKFVYVDQRATAILGYLPQELLGTSCYEYCHQDDHNHLAEKHKEVLQNKEKVFTNSYKFRAKDGSFITLKSQWFSFMNPWTKELEYIVSNNTVVLGHNESAEEQVSYGSQPAEGAVKQSLVSVPGMSSGTVLGAGSIGTEIANEILELQRLHSSPPGELSPSHLLRKSPSPALTVNCSNVPNKELIQLCPSEAEVLETSEQNQGAIPFPSNEPLLGGNSQLDFAICENDDTAMTALMNYLEADGGLGDPAELSDIQWAL.

Positions 1–10 (MAEAGVGSAE) are enriched in low complexity. 2 disordered regions span residues 1 to 29 (MAEAGVGSAEGAEEERRAVEENFPVDGNS) and 41 to 86 (PITK…EDEE). The span at 45–54 (PATTSFNNSV) shows a compositional bias: polar residues. Residues 67–76 (DNQDTVEVDG) are compositionally biased toward acidic residues. Positions 77–86 (DPQKRNEDEE) are enriched in basic and acidic residues. The 54-residue stretch at 92 to 145 (DFREAHSQTEKRRRDKMNNLIEELSAMIPQCNPMARKLDKLTVLRMAVQHLKSL) folds into the bHLH domain. PAS domains are found at residues 163–235 (KDDE…DVSP) and 342–412 (VPQK…LQNK). In terms of domain architecture, PAC spans 417–460 (TNSYKFRAKDGSFITLKSQWFSFMNPWTKELEYIVSNNTVVLGH).

As to quaternary structure, component of the circadian core oscillator, which includes the CRY proteins, CLOCK, or NPAS2, BMAL1 or BMAL2, CSNK1D and/or CSNK1E, TIMELESS and the PER proteins. Interacts directly with CLOCK to form the BMAL2-CLOCK transactivator. Can form heterodimers or homodimers which interact directly with CLOCK to form the transcription activator. In terms of tissue distribution, expressed in the pineal gland.

The protein resides in the nucleus. Its function is as follows. Transcriptional activator which forms a core component of the circadian clock. The circadian clock, an internal time-keeping system, regulates various physiological processes through the generation of approximately 24 hour circadian rhythms in gene expression, which are translated into rhythms in metabolism and behavior. It is derived from the Latin roots 'circa' (about) and 'diem' (day) and acts as an important regulator of a wide array of physiological functions including metabolism, sleep, body temperature, blood pressure, endocrine, immune, cardiovascular, and renal function. Consists of two major components: the central clock, residing in the suprachiasmatic nucleus (SCN) of the brain, and the peripheral clocks that are present in nearly every tissue and organ system. Both the central and peripheral clocks can be reset by environmental cues, also known as Zeitgebers (German for 'timegivers'). The predominant Zeitgeber for the central clock is light, which is sensed by retina and signals directly to the SCN. The central clock entrains the peripheral clocks through neuronal and hormonal signals, body temperature and feeding-related cues, aligning all clocks with the external light/dark cycle. Circadian rhythms allow an organism to achieve temporal homeostasis with its environment at the molecular level by regulating gene expression to create a peak of protein expression once every 24 hours to control when a particular physiological process is most active with respect to the solar day. Transcription and translation of core clock components (CLOCK, NPAS2, BMAL1, BMAL2, PER1, PER2, PER3, CRY1 and CRY2) plays a critical role in rhythm generation, whereas delays imposed by post-translational modifications (PTMs) are important for determining the period (tau) of the rhythms (tau refers to the period of a rhythm and is the length, in time, of one complete cycle). A diurnal rhythm is synchronized with the day/night cycle, while the ultradian and infradian rhythms have a period shorter and longer than 24 hours, respectively. Disruptions in the circadian rhythms contribute to the pathology of cardiovascular diseases, cancer, metabolic syndromes and aging. A transcription/translation feedback loop (TTFL) forms the core of the molecular circadian clock mechanism. Transcription factors, CLOCK or NPAS2 and BMAL1 or BMAL2, form the positive limb of the feedback loop, act in the form of a heterodimer and activate the transcription of core clock genes and clock-controlled genes (involved in key metabolic processes), harboring E-box elements (5'-CACGTG-3') within their promoters. The core clock genes: PER1/2/3 and CRY1/2 which are transcriptional repressors form the negative limb of the feedback loop and interact with the CLOCK|NPAS2-BMAL1|BMAL2 heterodimer inhibiting its activity and thereby negatively regulating their own expression. This heterodimer also activates nuclear receptors NR1D1/2 and RORA/B/G, which form a second feedback loop and which activate and repress BMAL1 transcription, respectively. The preferred binding motif for the CLOCK-BMAL1 heterodimer is 5'-CACGTGA-3', which contains a flanking adenine nucleotide at the 3-prime end of the canonical 6-nucleotide E-box sequence. CLOCK specifically binds to the half-site 5'-CAC-3', while BMAL1 binds to the half-site 5'-GTGA-3'. In Gallus gallus (Chicken), this protein is Basic helix-loop-helix ARNT-like protein 2 (BMAL2).